We begin with the raw amino-acid sequence, 413 residues long: Protein CDKN2AIP homolog B (413 aa).

The XRN2-binding (XTBD) domain maps to 21 to 118 (LERVRGQCES…TTRDELVAKV (98 aa)). Positions 118–266 (VKKRGNSSSN…PTRRFTTEHT (149 aa)) are disordered. The segment covering 183–193 (NKREAHSRTDV) has biased composition (basic and acidic residues).

It belongs to the CARF family.

Its subcellular location is the nucleus. It is found in the nucleoplasm. Its function is as follows. May regulate DNA damage response and cell proliferation. In Xenopus laevis (African clawed frog), this protein is Protein CDKN2AIP homolog B (cdkn2aip-b).